Consider the following 298-residue polypeptide: UDP-N-acetylenolpyruvoylglucosamine reductase (298 aa).

The FAD-binding PCMH-type domain maps to 27–191; the sequence is TGGNADVFVM…LDATFSLELE (165 aa). R170 is a catalytic residue. S220 (proton donor) is an active-site residue. Residue E290 is part of the active site.

This sequence belongs to the MurB family. It depends on FAD as a cofactor.

Its subcellular location is the cytoplasm. The enzyme catalyses UDP-N-acetyl-alpha-D-muramate + NADP(+) = UDP-N-acetyl-3-O-(1-carboxyvinyl)-alpha-D-glucosamine + NADPH + H(+). It participates in cell wall biogenesis; peptidoglycan biosynthesis. In terms of biological role, cell wall formation. In Listeria innocua serovar 6a (strain ATCC BAA-680 / CLIP 11262), this protein is UDP-N-acetylenolpyruvoylglucosamine reductase.